A 187-amino-acid chain; its full sequence is Ponticulin-like protein K (187 aa).

Residues methionine 1–serine 19 form the signal peptide. N-linked (GlcNAc...) asparagine glycans are attached at residues asparagine 31, asparagine 70, asparagine 86, asparagine 93, asparagine 119, asparagine 128, asparagine 146, asparagine 160, and asparagine 161. Residues proline 115–asparagine 146 show a composition bias toward low complexity. The tract at residues proline 115–asparagine 161 is disordered. Positions glutamine 147–asparagine 161 are enriched in polar residues. Asparagine 161 carries GPI-like-anchor amidated asparagine lipidation. Positions serine 162–isoleucine 187 are cleaved as a propeptide — removed in mature form.

This sequence belongs to the ponticulin family. In terms of processing, the GPI-like-anchor contains a phosphoceramide group, rather than a phosphatidyl group.

It is found in the cell membrane. In terms of biological role, binds F-actin and nucleates actin assembly. This Dictyostelium discoideum (Social amoeba) protein is Ponticulin-like protein K (ponK).